Consider the following 584-residue polypeptide: Sulfite reductase [NADPH] hemoprotein beta-component (584 aa).

[4Fe-4S] cluster-binding residues include Cys-447, Cys-453, Cys-492, and Cys-496. Cys-496 serves as a coordination point for siroheme.

It belongs to the nitrite and sulfite reductase 4Fe-4S domain family. As to quaternary structure, alpha(8)-beta(8). The alpha component is a flavoprotein, the beta component is a hemoprotein. Requires siroheme as cofactor. It depends on [4Fe-4S] cluster as a cofactor.

It catalyses the reaction hydrogen sulfide + 3 NADP(+) + 3 H2O = sulfite + 3 NADPH + 4 H(+). The protein operates within sulfur metabolism; hydrogen sulfide biosynthesis; hydrogen sulfide from sulfite (NADPH route): step 1/1. In terms of biological role, component of the sulfite reductase complex that catalyzes the 6-electron reduction of sulfite to sulfide. This is one of several activities required for the biosynthesis of L-cysteine from sulfate. The protein is Sulfite reductase [NADPH] hemoprotein beta-component of Colwellia psychrerythraea (strain 34H / ATCC BAA-681) (Vibrio psychroerythus).